Reading from the N-terminus, the 297-residue chain is ClpXP adapter protein SpxH (297 aa).

The protein belongs to the SpxH family. As to quaternary structure, interacts with Spx.

The protein resides in the cytoplasm. Functionally, adapter protein required for efficient degradation of Spx by ClpXP under non-stress conditions. Interaction with Spx stabilizes Spx and exposes the C-terminus of Spx for recognition and proteolysis by ClpXP. The sequence is that of ClpXP adapter protein SpxH from Bacillus cereus (strain ATCC 10987 / NRS 248).